A 374-amino-acid chain; its full sequence is Serpin B8 (374 aa).

It belongs to the serpin family. Ov-serpin subfamily.

It is found in the cytoplasm. Its function is as follows. Has an important role in epithelial desmosome-mediated cell-cell adhesion. In Homo sapiens (Human), this protein is Serpin B8 (SERPINB8).